The following is a 179-amino-acid chain: Ribosomal-protein-serine acetyltransferase (179 aa).

Positions 11-172 (LELHAVAENH…NDAYDDVNLY (162 aa)) constitute an N-acetyltransferase domain.

Belongs to the acetyltransferase family. RimL subfamily.

Its subcellular location is the cytoplasm. The catalysed reaction is N-terminal L-seryl-[ribosomal protein bL12] + acetyl-CoA = N-terminal N(alpha)-acetyl-L-seryl-[ribosomal protein bL12] + CoA + H(+). Functionally, this enzyme acetylates the N-terminal serine of ribosomal protein bL12, converting it into the acetylated form of bL12 known as bL7. The chain is Ribosomal-protein-serine acetyltransferase from Escherichia coli (strain K12).